Reading from the N-terminus, the 260-residue chain is UPF0246 protein Bphyt_1375 (260 aa).

It belongs to the UPF0246 family.

The chain is UPF0246 protein Bphyt_1375 from Paraburkholderia phytofirmans (strain DSM 17436 / LMG 22146 / PsJN) (Burkholderia phytofirmans).